Consider the following 164-residue polypeptide: D-aminoacyl-tRNA deacylase (164 aa).

Positions 72 and 89 each coordinate tRNA. Thr-90 (nucleophile) is an active-site residue. Residues 104 to 107 carry the C-terminal adenosine nucleotide of tRNA motif; sequence HLAK. A Gly-cisPro motif, allows the protein to recognize chirality of D-amino acids motif is present at residues 149 to 150; the sequence is GP.

It belongs to the DTD family. As to quaternary structure, homodimer.

It localises to the cytoplasm. It carries out the reaction glycyl-tRNA(Ala) + H2O = tRNA(Ala) + glycine + H(+). The enzyme catalyses a D-aminoacyl-tRNA + H2O = a tRNA + a D-alpha-amino acid + H(+). The catalysed reaction is D-tyrosyl-tRNA(Tyr) + H2O = D-tyrosine + tRNA(Tyr). Its function is as follows. D-aminoacyl-tRNA deacylase, with no observable activity on tRNAs charged with their cognate L-amino acid. Probably acts by rejecting L-amino acids from its binding site rather than specific recognition of D-amino acids. Catalyzes the hydrolysis of D-tyrosyl-tRNA(Tyr), has no activity on correctly charged L-tyrosyl-tRNA(Tyr). Hydrolyzes correctly charged, achiral, glycyl-tRNA(Gly). Deacylates mischarged D.melanogaster and E.coli glycyl-tRNA(Ala). Probably acts via tRNA-based rather than protein-based catalysis. Acts on tRNAs only when the D-amino acid is either attached to the ribose 3'-OH or transferred to the 3'-OH from the 2'-OH through rapid transesterification. Binds a number of other D-amino acids (D-Arg, D-Glu, D-His, D-Lys, D-Ser), suggesting it may also deacylate other mischarged tRNAs. This chain is D-aminoacyl-tRNA deacylase, found in Plasmodium falciparum (isolate 3D7).